Reading from the N-terminus, the 44-residue chain is uncharacterized protein (44 aa).

It is found in the plastid. The protein localises to the chloroplast. This is an uncharacterized protein from Trieres chinensis (Marine centric diatom).